Reading from the N-terminus, the 464-residue chain is Methylenetetrahydrofolate--tRNA-(uracil-5-)-methyltransferase TrmFO (464 aa).

13-18 (GGGLAG) lines the FAD pocket.

This sequence belongs to the MnmG family. TrmFO subfamily. It depends on FAD as a cofactor.

The protein localises to the cytoplasm. The catalysed reaction is uridine(54) in tRNA + (6R)-5,10-methylene-5,6,7,8-tetrahydrofolate + NADH + H(+) = 5-methyluridine(54) in tRNA + (6S)-5,6,7,8-tetrahydrofolate + NAD(+). It carries out the reaction uridine(54) in tRNA + (6R)-5,10-methylene-5,6,7,8-tetrahydrofolate + NADPH + H(+) = 5-methyluridine(54) in tRNA + (6S)-5,6,7,8-tetrahydrofolate + NADP(+). Its function is as follows. Catalyzes the folate-dependent formation of 5-methyl-uridine at position 54 (M-5-U54) in all tRNAs. This chain is Methylenetetrahydrofolate--tRNA-(uracil-5-)-methyltransferase TrmFO, found in Bartonella bacilliformis (strain ATCC 35685 / KC583 / Herrer 020/F12,63).